The sequence spans 226 residues: Glutathione peroxidase 3 (226 aa).

An N-terminal signal peptide occupies residues 1-24 (MARLLQASCLLSLLLAGFVPQSRG). The active site involves Sec73. A non-standard amino acid (selenocysteine) is located at residue Sec73.

Belongs to the glutathione peroxidase family. Homotetramer. Secreted in plasma.

It localises to the secreted. The enzyme catalyses 2 glutathione + H2O2 = glutathione disulfide + 2 H2O. It carries out the reaction tert-butyl hydroperoxide + 2 glutathione = tert-butanol + glutathione disulfide + H2O. Its function is as follows. Protects cells and enzymes from oxidative damage, by catalyzing the reduction of hydrogen peroxide, lipid peroxides and organic hydroperoxide, by glutathione. The chain is Glutathione peroxidase 3 from Hylobates lar (Lar gibbon).